A 398-amino-acid polypeptide reads, in one-letter code: MSSFDEDIKRSIWEGKIPIVFTLSPDDLTSHLSPSPYTLMAPRNSYFPLITSLVKDYFSSSTLVLLDEMWLEYRGIPLKWHLPIGVLYDTIVGNNNCNNSNNNNNNNNNNNNNNNNNNNNNNNNNNNNNNNNNNNNNNNNNNNNNNNIIMEQPYWNIVVHFQSYPDRILLRCPNIESVRTYYKNVLKEANFIKQGDITKINNLNINQSNDLWDGLKSHDYDKFWSVNKKLIPNSNKEYKNIPIRLIINYKPPIQELIPVFDENLVELTLENLFSRIPYESFSNFLNYNNNNNNNNINNNSPPLSPNSNNNNNNNNVDNSIENSLNQTNVESAEPEFSNLLQYIKATNAEYKIQGIQPSLKSSAVWLYEHFGHPDNFLYIVLIDPSQNNNNNNNNSNNY.

The interval 99-147 is disordered; that stretch reads NSNNNNNNNNNNNNNNNNNNNNNNNNNNNNNNNNNNNNNNNNNNNNNNN. Lys187 is covalently cross-linked (Glycyl lysine isopeptide (Lys-Gly) (interchain with G-Cter in ATG12)). Residues 292–321 are disordered; sequence NNNNINNNSPPLSPNSNNNNNNNNVDNSIE.

It belongs to the ATG5 family. In terms of processing, conjugated to atg12; which is essential for autophagy.

Its subcellular location is the cytoplasm. It localises to the preautophagosomal structure membrane. In terms of biological role, involved in autophagic vesicle formation. Conjugation with atg12, through a ubiquitin-like conjugating system involving atg7 as an E1-like activating enzyme and atg10 as an E2-like conjugating enzyme, is essential for its function. The atg12-atg5 conjugate acts as an E3-like enzyme which is required for lipidation of atg8 and its association to the vesicle membranes. This is Autophagy protein 5 (atg5) from Dictyostelium discoideum (Social amoeba).